The chain runs to 4699 residues: Fat-like cadherin-related tumor suppressor homolog (4699 aa).

The N-terminal stretch at 1-38 (MFTMKIKKYVTPVKRKAFTILQWISLLCSLWLIPTVQS) is a signal peptide. Over 39-4285 (KADEKHTATL…KNFSIEHISG (4247 aa)) the chain is Extracellular. 34 consecutive Cadherin domains span residues 63 to 183 (SHSV…SPLF), 184 to 291 (YPTQ…APEI), 288 to 400 (APEI…IPIF), 401 to 507 (TQEI…DPIF), 508 to 613 (ENVN…RPQF), 614 to 716 (ERVN…SSIL), 773 to 877 (VNFP…RPVI), 878 to 980 (QKTL…APVF), 981 to 1088 (GVQE…APEF), 1089 to 1198 (DDFV…KPVY), 1194 to 1299 (DKPV…SPEF), 1300 to 1405 (DQRV…APLI), 1408 to 1506 (KTSE…PPQF), 1507 to 1612 (AKDV…HPEF), 1613 to 1717 (TAKI…PPKF), 1718 to 1815 (PTNN…IPYF), 1816 to 1932 (VQNE…PPVF), 1933 to 2033 (NERE…NFAF), 2034 to 2140 (QRES…CPLF), 2141 to 2241 (VNMP…MPVF), 2242 to 2341 (EKQF…YPEI), 2342 to 2449 (ESDI…APCF), 2450 to 2551 (VEPS…SPLF), 2552 to 2654 (DQST…VPYF), 2655 to 2763 (LLKE…IPTF), 2764 to 2860 (EKSS…YPKF), 2861 to 2967 (DNTF…APVF), 2968 to 3072 (KLPI…KPRY), 3068 to 3169 (LKPR…MPIF), 3170 to 3273 (SMAQ…PPEF), 3274 to 3378 (SMRQ…SPTF), 3379 to 3483 (LQNL…APIF), 3484 to 3588 (SSSN…PPIV), and 3589 to 3696 (TPLE…VIRF). 2 N-linked (GlcNAc...) asparagine glycosylation sites follow: asparagine 68 and asparagine 159. N-linked (GlcNAc...) asparagine glycosylation occurs at asparagine 367. N-linked (GlcNAc...) asparagine glycosylation is found at asparagine 782, asparagine 846, and asparagine 926. N-linked (GlcNAc...) asparagine glycans are attached at residues asparagine 1109, asparagine 1201, asparagine 1315, asparagine 1442, asparagine 1476, and asparagine 1514. Intrachain disulfides connect cysteine 3807–cysteine 3819, cysteine 3814–cysteine 3851, cysteine 3853–cysteine 3862, cysteine 3869–cysteine 3880, cysteine 3874–cysteine 3891, cysteine 3893–cysteine 3902, cysteine 4071–cysteine 4105, cysteine 4117–cysteine 4128, cysteine 4122–cysteine 4138, cysteine 4140–cysteine 4149, cysteine 4156–cysteine 4167, cysteine 4161–cysteine 4177, cysteine 4179–cysteine 4188, cysteine 4194–cysteine 4205, cysteine 4199–cysteine 4214, cysteine 4216–cysteine 4224, cysteine 4231–cysteine 4242, cysteine 4236–cysteine 4251, and cysteine 4253–cysteine 4262. The 39-residue stretch at 3865-3903 (TVNACSTDPCSPQRICMPSGSALGYQCVCPKGFSGTYCE) folds into the EGF-like 1 domain. The Laminin G-like domain maps to 3921–4105 (AVSFGGKSYA…KRFTNVEFKC (185 aa)). EGF-like domains are found at residues 4113-4150 (RLGI…KHCE), 4152-4189 (DLDP…KRCE), 4190-4225 (YGKF…PTCE), and 4227-4263 (DVDE…ASCG). The chain crosses the membrane as a helical span at residues 4286–4306 (IISGVAVVLVIISCVLCCVVL). Residues 4307–4699 (KRSSSSKRRN…EFLPQQQTNN (393 aa)) are Cytoplasmic-facing.

As to expression, localizes where basal actin filaments terminate.

Its subcellular location is the cell membrane. Its function is as follows. Required for the planar polarity of actin filament orientation at the basal side of ovarian follicle cells. Required for proper egg chamber shape and elongation of the egg chamber during oogenesis. Required for the correct planar polarization of Rab10 within the basal follicle cell epithelium and is therefore indirectly involved in the Rab10-dependent remodeling of the basal membrane during egg chamber elongation. The protein is Fat-like cadherin-related tumor suppressor homolog (kug) of Drosophila melanogaster (Fruit fly).